The following is a 145-amino-acid chain: Large ribosomal subunit protein uL16 (145 aa).

The protein belongs to the universal ribosomal protein uL16 family. As to quaternary structure, part of the 50S ribosomal subunit.

Functionally, binds 23S rRNA and is also seen to make contacts with the A and possibly P site tRNAs. This is Large ribosomal subunit protein uL16 from Lactobacillus johnsonii (strain CNCM I-12250 / La1 / NCC 533).